The chain runs to 251 residues: MWRLLARASAPLLRVPLSDSWALLPASAGVKTLLPVPSFEDVSIPEKPKLRFIERAPLVPKVRREPKNLSDIRGPSTEATEFTEGNFAILALGGGYLHWGHFEMMRLTINRSMDPKNMFAIWRVPAPFKPITRKSVGHRMGGGKGAIDHYVTPVKAGRLVVEMGGRCEFEEVQGFLDQVAHKLPFAAKAVSRGTLEKMRKDQEERERNNQNPWTFERIATANMLGIRKVLSPYDLTHKGKYWGKFYMPKRV.

The transit peptide at 1–29 (MWRLLARASAPLLRVPLSDSWALLPASAG) directs the protein to the mitochondrion.

It belongs to the universal ribosomal protein uL16 family. As to quaternary structure, component of the mitochondrial large ribosomal subunit (mt-LSU). Mature mammalian 55S mitochondrial ribosomes consist of a small (28S) and a large (39S) subunit. The 28S small subunit contains a 12S ribosomal RNA (12S mt-rRNA) and 30 different proteins. The 39S large subunit contains a 16S rRNA (16S mt-rRNA), a copy of mitochondrial valine transfer RNA (mt-tRNA(Val)), which plays an integral structural role, and 52 different proteins.

It localises to the mitochondrion. This is Large ribosomal subunit protein uL16m (MRPL16) from Homo sapiens (Human).